A 361-amino-acid chain; its full sequence is Probable cadicidin biosynthesis thioesterase (361 aa).

Residues 2-29 (RVTVDSEQCVGAGQCVLNAPEVFDQDDD) form the 4Fe-4S ferredoxin-type domain. Positions 36-110 (RADPTSGTTR…RRDSPVTTAD (75 aa)) are disordered. Residues 46-61 (RSARRATCARRPRSSS) show a composition bias toward basic residues. 2 stretches are compositionally biased toward basic and acidic residues: residues 62–74 (RRTE…DRHR) and 94–104 (TDRRQNHRRDS). Ser201 is an active-site residue.

Belongs to the thioesterase family.

The protein operates within antibiotic biosynthesis; candicidin biosynthesis. In terms of biological role, probable thioesterase involved in the biosynthesis of candicidin. Could release the macrolide ring from the polyketide synthase. The chain is Probable cadicidin biosynthesis thioesterase from Streptomyces griseus.